The chain runs to 100 residues: Co-chaperonin GroES (100 aa).

It belongs to the GroES chaperonin family. As to quaternary structure, heptamer of 7 subunits arranged in a ring. Interacts with the chaperonin GroEL.

It localises to the cytoplasm. Its function is as follows. Together with the chaperonin GroEL, plays an essential role in assisting protein folding. The GroEL-GroES system forms a nano-cage that allows encapsulation of the non-native substrate proteins and provides a physical environment optimized to promote and accelerate protein folding. GroES binds to the apical surface of the GroEL ring, thereby capping the opening of the GroEL channel. In Mycobacterium marinum (strain ATCC BAA-535 / M), this protein is Co-chaperonin GroES.